The primary structure comprises 1154 residues: FERM domain-containing protein A (1154 aa).

Disordered regions lie at residues 122-149 (NNNS…SSSS), 432-468 (NLSS…NHHN), 715-734 (NKNN…SSSS), 771-794 (SNSN…TSSS), and 961-980 (TNGS…NNGI). FERM domains lie at 218 to 547 (PLHQ…PSIQ) and 666 to 1103 (REIV…QTKL). Residues 437–447 (GGSGNGSGSGN) are compositionally biased toward gly residues. The segment covering 448–463 (GSSSSSSNSSSGNNNN) has biased composition (low complexity).

Its function is as follows. Key regulator of adhesion dynamics, it acts as an anti-adhesive. Plays a critical role in the regulation of cell-cell adhesion, multi-cellular development and, in particular, the formation of the organising center known as the tip. Required for turnover of paxillin-adhesion sites during cell migration. Plays a major role in normal cell shape, cell-substrate adhesion and actin cytoskeleton organization. This chain is FERM domain-containing protein A (frmA), found in Dictyostelium discoideum (Social amoeba).